Here is a 298-residue protein sequence, read N- to C-terminus: Transcription factor BOA (298 aa).

Disordered stretches follow at residues 1–26 (MGKEVMVSDYGDDDGEDAGGGDEYRI), 79–143 (LRSS…KRPR), and 206–232 (EDPYSSSDQLFSSTPVPPQSFQDGGGS). A compositionally biased stretch (acidic residues) spans 10-20 (YGDDDGEDAGG). Basic and acidic residues predominate over residues 104-113 (DPKKQKKSDG). Residues 122–131 (STAEEGDSGP) are compositionally biased toward acidic residues. Residues 138 to 197 (TSKRPRLVWTPQLHKRFVDVVAHLGIKNAVPKTIMQLMNVEGLTRENVASHLQKYRLYLK) constitute a DNA-binding region (myb-like GARP). Over residues 209–227 (YSSSDQLFSSTPVPPQSFQ) the composition is skewed to polar residues.

The protein localises to the nucleus. In terms of biological role, transcription factor that is a critical component of the regulatory circuit of the circadian clock. Binds to specific sites on CCA1 promoter leading to CCA1 activation. Is required for the rhythmic expression of other clock genes such as LHY, GI and APRR1/TOC1. The polypeptide is Transcription factor BOA (BOA) (Arabidopsis thaliana (Mouse-ear cress)).